A 207-amino-acid polypeptide reads, in one-letter code: Large ribosomal subunit protein uL4 (207 aa).

The disordered stretch occupies residues 57–78; sequence VAGGGKKPWRQKGTGRARHGSI. A compositionally biased stretch (basic residues) spans 63-77; it reads KPWRQKGTGRARHGS.

This sequence belongs to the universal ribosomal protein uL4 family. In terms of assembly, part of the 50S ribosomal subunit.

One of the primary rRNA binding proteins, this protein initially binds near the 5'-end of the 23S rRNA. It is important during the early stages of 50S assembly. It makes multiple contacts with different domains of the 23S rRNA in the assembled 50S subunit and ribosome. Its function is as follows. Forms part of the polypeptide exit tunnel. This Onion yellows phytoplasma (strain OY-M) protein is Large ribosomal subunit protein uL4.